A 383-amino-acid chain; its full sequence is L-aspartate/L-glutamate decarboxylase (383 aa).

The residue at position 232 (Lys232) is an N6-(pyridoxal phosphate)lysine.

This sequence belongs to the group II decarboxylase family. MfnA subfamily. As to quaternary structure, monomer. Pyridoxal 5'-phosphate serves as cofactor.

It carries out the reaction L-aspartate + H(+) = beta-alanine + CO2. The catalysed reaction is L-glutamate + H(+) = 4-aminobutanoate + CO2. It catalyses the reaction L-cysteate + H(+) = taurine + CO2. The enzyme catalyses 3-sulfino-L-alanine + H(+) = hypotaurine + CO2. The protein operates within cofactor biosynthesis; coenzyme A biosynthesis. In terms of biological role, catalyzes the decarboxylation of L-aspartate to produce beta-alanine, and the decarboxylation of L-glutamate to produce 4-aminobutanoate. Can also use cysteate and, to a lesser extent, cysteine sulfite (3-sulfino-L-alanine), but not L-tyrosine. Specific activities toward L-aspartate and cysteate are higher than toward L-glutamate. This chain is L-aspartate/L-glutamate decarboxylase, found in Pyrococcus horikoshii (strain ATCC 700860 / DSM 12428 / JCM 9974 / NBRC 100139 / OT-3).